Consider the following 364-residue polypeptide: Long-wave-sensitive opsin 1 (364 aa).

The tract at residues 1 to 23 (MAQQWSLQRLAGRHPQDSYEDST) is disordered. Over 1–52 (MAQQWSLQRLAGRHPQDSYEDSTQSSIFTYTNSNSTRGPFEGPNYHIAPRWV) the chain is Extracellular. Ser22 is a glycosylation site (O-linked (GlcNAc) serine). A glycan (N-linked (GlcNAc...) asparagine) is linked at Asn34. A helical membrane pass occupies residues 53-77 (YHLTSVWMIFVVTASVFTNGLVLAA). Residues 78-89 (TMKFKKLRHPLN) are Cytoplasmic-facing. Residues 90–115 (WILVNLAVADLAETVIASTISIVNQV) form a helical membrane-spanning segment. The Extracellular segment spans residues 116–129 (SGYFVLGHPMCVLE). Cys126 and Cys203 are oxidised to a cystine. A helical transmembrane segment spans residues 130–149 (GYTVSLCGITGLWSLAIISW). At 150–168 (ERWMVVCKPFGNVRFDAKL) the chain is on the cytoplasmic side. The helical transmembrane segment at 169 to 192 (AIVGIAFSWIWAAVWTAPPIFGWS) threads the bilayer. Topologically, residues 193–218 (RYWPHGLKTSCGPDVFSGSSYPGVQS) are extracellular. Residues 219 to 246 (YMIVLMVTCCIIPLAIIMLCYLQVWLAI) traverse the membrane as a helical segment. Topologically, residues 247–268 (RAVAKQQKESESTQKAEKEVTR) are cytoplasmic. The helical transmembrane segment at 269–292 (MVVVMIFAYCVCWGPYTFFACFAA) threads the bilayer. Residues 293 to 300 (ANPGYAFH) lie on the Extracellular side of the membrane. The chain crosses the membrane as a helical span at residues 301–325 (PLMAALPAYFAKSATIYNPVIYVFM). At Lys312 the chain carries N6-(retinylidene)lysine. Residues 326–364 (NRQFRNCILQLFGKKVDDGSELSSASKTEVSSVSSVSPA) lie on the Cytoplasmic side of the membrane.

The protein belongs to the G-protein coupled receptor 1 family. Opsin subfamily. In terms of processing, phosphorylated on some or all of the serine and threonine residues present in the C-terminal region. In terms of tissue distribution, the three color pigments are found in the cone photoreceptor cells.

The protein localises to the membrane. Its function is as follows. Visual pigments are the light-absorbing molecules that mediate vision. They consist of an apoprotein, opsin, covalently linked to cis-retinal. The protein is Long-wave-sensitive opsin 1 (OPN1LW) of Homo sapiens (Human).